The chain runs to 549 residues: Glucose-6-phosphate isomerase (549 aa).

Catalysis depends on Glu-355, which acts as the Proton donor. Catalysis depends on residues His-387 and Lys-515.

It belongs to the GPI family.

Its subcellular location is the cytoplasm. The catalysed reaction is alpha-D-glucose 6-phosphate = beta-D-fructose 6-phosphate. The protein operates within carbohydrate biosynthesis; gluconeogenesis. Its pathway is carbohydrate degradation; glycolysis; D-glyceraldehyde 3-phosphate and glycerone phosphate from D-glucose: step 2/4. Catalyzes the reversible isomerization of glucose-6-phosphate to fructose-6-phosphate. This Mannheimia succiniciproducens (strain KCTC 0769BP / MBEL55E) protein is Glucose-6-phosphate isomerase.